Consider the following 587-residue polypeptide: Phosphomethylpyrimidine synthase (587 aa).

Substrate-binding positions include asparagine 218, methionine 247, tyrosine 276, histidine 312, 332 to 334, 373 to 376, and glutamate 412; these read SRG and DGLR. Histidine 416 provides a ligand contact to Zn(2+). Tyrosine 439 is a binding site for substrate. Histidine 480 provides a ligand contact to Zn(2+). [4Fe-4S] cluster-binding residues include cysteine 560, cysteine 563, and cysteine 568.

It belongs to the ThiC family. It depends on [4Fe-4S] cluster as a cofactor.

It carries out the reaction 5-amino-1-(5-phospho-beta-D-ribosyl)imidazole + S-adenosyl-L-methionine = 4-amino-2-methyl-5-(phosphooxymethyl)pyrimidine + CO + 5'-deoxyadenosine + formate + L-methionine + 3 H(+). It participates in cofactor biosynthesis; thiamine diphosphate biosynthesis. Catalyzes the synthesis of the hydroxymethylpyrimidine phosphate (HMP-P) moiety of thiamine from aminoimidazole ribotide (AIR) in a radical S-adenosyl-L-methionine (SAM)-dependent reaction. The chain is Phosphomethylpyrimidine synthase from Porphyromonas gingivalis (strain ATCC BAA-308 / W83).